We begin with the raw amino-acid sequence, 235 residues long: Caffeoyl-CoA O-methyltransferase (235 aa).

Lysine 8 provides a ligand contact to substrate. S-adenosyl-L-methionine is bound by residues valine 52, glutamate 74, 76–77, serine 82, aspartate 100, and alanine 129; that span reads GV. Aspartate 151 lines the substrate pocket. Residue aspartate 151 participates in a divalent metal cation binding. Aspartate 153 provides a ligand contact to S-adenosyl-L-methionine. 2 residues coordinate a divalent metal cation: aspartate 177 and asparagine 178.

This sequence belongs to the class I-like SAM-binding methyltransferase superfamily. Cation-dependent O-methyltransferase family. CCoAMT subfamily. A divalent metal cation serves as cofactor.

It catalyses the reaction (E)-caffeoyl-CoA + S-adenosyl-L-methionine = (E)-feruloyl-CoA + S-adenosyl-L-homocysteine + H(+). It functions in the pathway aromatic compound metabolism; phenylpropanoid biosynthesis. In terms of biological role, methylates caffeoyl-CoA to feruloyl-CoA and 5-hydroxyferuloyl-CoA to sinapoyl-CoA. Plays a role in the synthesis of feruloylated polysaccharides. Involved in the reinforcement of the plant cell wall. Also involved in the responding to wounding or pathogen challenge by the increased formation of cell wall-bound ferulic acid polymers. The sequence is that of Caffeoyl-CoA O-methyltransferase from Populus kitakamiensis (Aspen).